A 316-amino-acid chain; its full sequence is Serpentine receptor class gamma-8 (316 aa).

7 consecutive transmembrane segments (helical) span residues 28–48 (FVQV…LYVV), 60–80 (PFFM…IFIT), 106–126 (LYYP…IFLT), 147–167 (FSRI…NTII), 186–206 (IIPW…VVMI), 235–255 (ACAA…MKVL), and 267–287 (LVQP…MIFA).

This sequence belongs to the nematode receptor-like protein srg family.

The protein resides in the membrane. The sequence is that of Serpentine receptor class gamma-8 (srg-8) from Caenorhabditis elegans.